The chain runs to 421 residues: F-box protein At2g17690 (421 aa).

The F-box domain maps to 2 to 50; it reads GDWSKLPEELLGLIALRLYSVIELIRFRSICKSWRSSASGVNKNHSLSS.

Its function is as follows. Involved in heat stress response. Contributes to recovery from heat stress. The chain is F-box protein At2g17690 from Arabidopsis thaliana (Mouse-ear cress).